Reading from the N-terminus, the 595-residue chain is Threonine dehydratase 2 biosynthetic, chloroplastic (595 aa).

The N-terminal 51 residues, Met1–Leu51, are a transit peptide targeting the chloroplast. Residue Lys143 is modified to N6-(pyridoxal phosphate)lysine. 2 ACT-like domains span residues Ala420 to His492 and Ile514 to Tyr585.

This sequence belongs to the serine/threonine dehydratase family. Homotetramer. The cofactor is pyridoxal 5'-phosphate. Post-translationally, proteolytically cleaved by a chymotrypsin-like digestive protease in the midgut of the lepidopteran insects to remove the C-terminal regulatory domain, which allows efficient metabolizing of threonine in the presence of high isoleucine levels in the gut. In terms of tissue distribution, expressed in floral buds, 8-9 mm long flowers 1 to 2 days before anthesis, open flowers and floral organs including sepals, petals, stamens and carpels of 8-9 mm flowers (at protein level). Expressed in very early floral meristems of the anantha. Over 500-fold expression in mature flowers compared to leaves. Expressed in sepals, petals, stamens and carpels of the mature flower. In sepals, mostly expressed in the abaxial mesophyll cells and in petals in parenchymal cells. Not expressed in epidermal or vascular tissues of sepals and petals. In stamens, expressed in parenchymal cells of the connective and lobes, but not expressed in differentiated tissues such as tapetum (TP), stomium (SM), or pollen grains (PG). Not expressed in roots or seeds. High level of expression in immature flower buds, unopened flowers and opened flowers. Not expressed in unstressed leaves, root, stem or petiole.

Its subcellular location is the plastid. It localises to the chloroplast. The enzyme catalyses L-threonine = 2-oxobutanoate + NH4(+). It catalyses the reaction L-serine = pyruvate + NH4(+). It functions in the pathway amino-acid biosynthesis; L-isoleucine biosynthesis; 2-oxobutanoate from L-threonine: step 1/1. Threonine dehydratase 2 biosynthetic, chloroplastic: Strongly inhibited by 1 mM isoleucine. Processed threonine dehydratase 2: Not inhibited by isoleucine. Not required for normal growth and development of the plant. In terms of biological role, involved in defense against lepidopteran, but not coleopteran herbivore insects. Acts in the insect gut to degrade threonine, which is an essential and limiting nutrient for the growth of lepidopteran larvae. Active against both L-threonine and L-serine. The chain is Threonine dehydratase 2 biosynthetic, chloroplastic from Solanum lycopersicum (Tomato).